Reading from the N-terminus, the 210-residue chain is Uracil phosphoribosyltransferase (210 aa).

Residues R80, R105, and 132–140 (DPMLATGGS) each bind 5-phospho-alpha-D-ribose 1-diphosphate. Uracil contacts are provided by residues I195 and 200–202 (GDA). D201 contacts 5-phospho-alpha-D-ribose 1-diphosphate.

Belongs to the UPRTase family. It depends on Mg(2+) as a cofactor.

It catalyses the reaction UMP + diphosphate = 5-phospho-alpha-D-ribose 1-diphosphate + uracil. It participates in pyrimidine metabolism; UMP biosynthesis via salvage pathway; UMP from uracil: step 1/1. With respect to regulation, allosterically activated by GTP. Functionally, catalyzes the conversion of uracil and 5-phospho-alpha-D-ribose 1-diphosphate (PRPP) to UMP and diphosphate. In Caldanaerobacter subterraneus subsp. tengcongensis (strain DSM 15242 / JCM 11007 / NBRC 100824 / MB4) (Thermoanaerobacter tengcongensis), this protein is Uracil phosphoribosyltransferase.